The sequence spans 331 residues: Biotin synthase (331 aa).

Residues 52–277 (PDVEVEGIIS…RTMLRFAGGR (226 aa)) enclose the Radical SAM core domain. The [4Fe-4S] cluster site is built by cysteine 67, cysteine 71, and cysteine 74. The [2Fe-2S] cluster site is built by cysteine 110, cysteine 143, cysteine 202, and arginine 272.

Belongs to the radical SAM superfamily. Biotin synthase family. As to quaternary structure, homodimer. Requires [4Fe-4S] cluster as cofactor. [2Fe-2S] cluster is required as a cofactor.

The catalysed reaction is (4R,5S)-dethiobiotin + (sulfur carrier)-SH + 2 reduced [2Fe-2S]-[ferredoxin] + 2 S-adenosyl-L-methionine = (sulfur carrier)-H + biotin + 2 5'-deoxyadenosine + 2 L-methionine + 2 oxidized [2Fe-2S]-[ferredoxin]. It functions in the pathway cofactor biosynthesis; biotin biosynthesis; biotin from 7,8-diaminononanoate: step 2/2. Functionally, catalyzes the conversion of dethiobiotin (DTB) to biotin by the insertion of a sulfur atom into dethiobiotin via a radical-based mechanism. The polypeptide is Biotin synthase (Mycolicibacterium gilvum (strain PYR-GCK) (Mycobacterium gilvum (strain PYR-GCK))).